A 271-amino-acid polypeptide reads, in one-letter code: MARRLSLLAVVLAMVAAVSASTAAAQSCGCASDQCCSKWGFCGTGSDYCGTGCQAGPCDVPATNDVSVASIVTPEFFAALVAQADDGCAAKGFYTRDAFLTAAGGYPSFGRTGSVDDSKREIAAFFAHANHETIKFCYIEEIDGPSKNYCDETSTQWPCMAGKGYYGRGPLQISWNFNYGPAGQSIGFDGLGDPDAVARSPVLAFQTALWYWTNNVHDAFVSGQGFGATIRAINGALECDGKNPTAVSNRVAYYQQFCQQFGVDPGSNLTC.

Positions 1–20 (MARRLSLLAVVLAMVAAVSA) are cleaved as a signal peptide. A Chitin-binding type-1 domain is found at 25-60 (AQSCGCASDQCCSKWGFCGTGSDYCGTGCQAGPCDV). 6 disulfide bridges follow: cysteine 28–cysteine 36, cysteine 30–cysteine 42, cysteine 35–cysteine 49, cysteine 88–cysteine 137, cysteine 150–cysteine 159, and cysteine 239–cysteine 271. Glutamate 132 (proton donor) is an active-site residue. A glycan (N-linked (GlcNAc...) asparagine) is linked at asparagine 268.

This sequence belongs to the glycosyl hydrolase 19 family. Chitinase class IV subfamily. As to expression, expressed in roots, leaves, sheaths and meristems.

It catalyses the reaction Random endo-hydrolysis of N-acetyl-beta-D-glucosaminide (1-&gt;4)-beta-linkages in chitin and chitodextrins.. In terms of biological role, may function in reproductive organs during embryogenesis and seed maturation. In Oryza sativa subsp. japonica (Rice), this protein is Chitinase 6 (Cht6).